Consider the following 277-residue polypeptide: NADPH-dependent 7-cyano-7-deazaguanine reductase (277 aa).

Position 83–85 (83–85) interacts with substrate; that stretch reads VES. 85 to 86 serves as a coordination point for NADPH; sequence SK. Catalysis depends on Cys184, which acts as the Thioimide intermediate. Asp191 acts as the Proton donor in catalysis. A substrate-binding site is contributed by 223-224; that stretch reads HE. 252–253 contributes to the NADPH binding site; the sequence is RG.

The protein belongs to the GTP cyclohydrolase I family. QueF type 2 subfamily. As to quaternary structure, homodimer.

It localises to the cytoplasm. The enzyme catalyses 7-aminomethyl-7-carbaguanine + 2 NADP(+) = 7-cyano-7-deazaguanine + 2 NADPH + 3 H(+). It participates in tRNA modification; tRNA-queuosine biosynthesis. Functionally, catalyzes the NADPH-dependent reduction of 7-cyano-7-deazaguanine (preQ0) to 7-aminomethyl-7-deazaguanine (preQ1). The sequence is that of NADPH-dependent 7-cyano-7-deazaguanine reductase from Cupriavidus metallidurans (strain ATCC 43123 / DSM 2839 / NBRC 102507 / CH34) (Ralstonia metallidurans).